The primary structure comprises 615 residues: Fibrinogen alpha chain (615 aa).

A signal peptide spans 1-19 (MFSVRDLCLVLSLVGAIKT). Residues 71 to 602 (CRMKGLIDEV…GHTKARPARG (532 aa)) adopt a coiled-coil conformation. A disordered region spans residues 267-427 (FGGDGHARGD…TKQEFHTGKL (161 aa)). The span at 293-302 (GTSSIGNVNP) shows a compositional bias: polar residues. O-linked (GalNAc...) threonine glycosylation occurs at Thr-325. Residues 373–396 (GSAGTWNTGSSGSSSFRPDSSGHG) show a composition bias toward low complexity. Cys-455 and Cys-485 are disulfide-bonded. The segment at 530 to 615 (EFAALGESGS…SPLGEPSLTP (86 aa)) is disordered. A compositionally biased stretch (low complexity) spans 537–549 (SGSSSSKTSTHSK). Residues 550 to 560 (QFVSSSTTVNR) are compositionally biased toward polar residues. The segment covering 591 to 601 (QKGHTKARPAR) has biased composition (basic residues).

In terms of assembly, heterohexamer; disulfide linked. Contains 2 sets of 3 non-identical chains (alpha, beta and gamma). The 2 heterotrimers are in head to head conformation with the N-termini in a small central domain. Post-translationally, conversion of fibrinogen to fibrin is triggered by thrombin, which cleaves fibrinopeptides A and B from alpha and beta chains, and thus exposes the N-terminal polymerization sites responsible for the formation of the soft clot. The soft clot is converted into the hard clot by factor XIIIA which catalyzes the epsilon-(gamma-glutamyl)lysine cross-linking between gamma chains (stronger) and between alpha chains (weaker) of different monomers. Forms F13A-mediated cross-links between a glutamine and the epsilon-amino group of a lysine residue, forming fibronectin-fibrinogen heteropolymers.

It localises to the secreted. Functionally, cleaved by the protease thrombin to yield monomers which, together with fibrinogen beta (FGB) and fibrinogen gamma (FGG), polymerize to form an insoluble fibrin matrix. Fibrin has a major function in hemostasis as one of the primary components of blood clots. In addition, functions during the early stages of wound repair to stabilize the lesion and guide cell migration during re-epithelialization. Was originally thought to be essential for platelet aggregation, based on in vitro studies using anticoagulated blood. However, subsequent studies have shown that it is not absolutely required for thrombus formation in vivo. Enhances expression of SELP in activated platelets via an ITGB3-dependent pathway. Maternal fibrinogen is essential for successful pregnancy. Fibrin deposition is also associated with infection, where it protects against IFNG-mediated hemorrhage. May also facilitate the immune response via both innate and T-cell mediated pathways. The protein is Fibrinogen alpha chain (FGA) of Bos taurus (Bovine).